A 317-amino-acid chain; its full sequence is NADH kinase (317 aa).

Belongs to the NAD kinase family. As to quaternary structure, homodimer. Ubiquitous.

The protein resides in the cytoplasm. The enzyme catalyses NADH + ATP = ADP + NADPH + H(+). Two-fold decrease in activity in the presence of PPi, iodoacetate or para-chloromercuribenzoate. In terms of biological role, phosphorylates specifically NADH. Can phosphorylate NAD with a 100-fold decrease in efficiency compared to NADH. Prefers ATP as nucleoside triphosphate substrate. Can also utilize UTP, GTP and CTP. Key source of the cellular reductant NADPH which is an important antioxidant factor. The protein is NADH kinase (NADK3) of Arabidopsis thaliana (Mouse-ear cress).